The sequence spans 2462 residues: Serine/threonine-protein kinase Wnk (2462 aa).

Disordered regions lie at residues Asn-18 to Ser-133, Asn-146 to Ser-248, and Glu-365 to Pro-461. Polar residues-rich tracts occupy residues Asp-29–Lys-58 and Asn-65–Ser-78. The span at Thr-94–Thr-124 shows a compositional bias: low complexity. Polar residues predominate over residues Asn-146–Ser-155. Composition is skewed to basic and acidic residues over residues Gln-190–Pro-205, Asp-237–Ser-247, and Gln-396–Ser-413. Residues Ser-414–Lys-452 are compositionally biased toward low complexity. The 259-residue stretch at Phe-471–Phe-729 folds into the Protein kinase domain. ATP is bound by residues Ser-481, Thr-551–Met-554, and Lys-601. Catalysis depends on Asp-618, which acts as the Proton acceptor. 2 positions are modified to phosphoserine; by autocatalysis: Ser-628 and Ser-632. Disordered regions lie at residues Leu-844 to Lys-873, Leu-893 to Gln-923, and Pro-1006 to Gln-1055. Over residues Val-855–Asp-870 the composition is skewed to acidic residues. A compositionally biased stretch (polar residues) spans Leu-893–Ile-918. 2 stretches are compositionally biased toward low complexity: residues Pro-1006–Thr-1034 and His-1041–Gln-1055. Residues Ala-1142–Gln-1178 adopt a coiled-coil conformation. Residues Gln-1236–Pro-1251 are compositionally biased toward polar residues. Disordered regions lie at residues Gln-1236–Val-1256, Gln-1322–Ser-1382, Gly-1418–Ser-1465, Leu-1554–Thr-1578, Asn-1615–Lys-1699, Asp-1762–Gly-1790, Gln-1828–Ser-1895, His-1929–Gln-1966, and Thr-2122–Ser-2229. Over residues Ser-1559–Arg-1568 the composition is skewed to basic residues. Positions Ser-1627–Thr-1641 are enriched in low complexity. Residues Ala-1642–Ser-1674 show a composition bias toward polar residues. Composition is skewed to polar residues over residues Gln-1828 to Asn-1852, Ser-1861 to Gly-1894, and Ser-1943 to Gln-1966. Residues Gln-2125–Ser-2136 are compositionally biased toward low complexity. Residues Val-2137 to Leu-2160 are compositionally biased toward polar residues. Residues Gln-2161–Gln-2211 are compositionally biased toward low complexity. Residues Phe-2212–Ser-2229 are compositionally biased toward polar residues.

It belongs to the protein kinase superfamily. Ser/Thr protein kinase family. WNK subfamily. Requires Mg(2+) as cofactor. Autophosphorylated. Autophosphorylation at Ser-628 and Ser-632 promotes its activity.

Its subcellular location is the cytoplasm. It carries out the reaction L-seryl-[protein] + ATP = O-phospho-L-seryl-[protein] + ADP + H(+). The catalysed reaction is L-threonyl-[protein] + ATP = O-phospho-L-threonyl-[protein] + ADP + H(+). Its activity is regulated as follows. Activated in response to hyperosmotic stress: cell shrinkage promotes formation of a membraneless compartment that concentrates wnk-1 with its downstrem substrates. Activation requires autophosphorylation. Autophosphorylation and subsequent activation is inhibited by increases in intracellular Cl(-) or K(+). In terms of biological role, serine/threonine-protein kinase component of the WNK-SPAK/OSR1 kinase cascade, which plays an important role in the regulation of electrolyte homeostasis and regulatory volume increase in response to hyperosmotic stress. Wnk mediates regulatory volume increase in response to hyperosmotic stress by acting as a molecular crowding sensor, which senses cell shrinkage and mediates formation of a membraneless compartment by undergoing liquid-liquid phase separation. The membraneless compartment concentrates Wnk with its substrate Fray, promoting Wnk-dependent phosphorylation and activation of downstream kinase Fray. Following activation, Fray catalyzes phosphorylation of ion cotransporters Ncc69 and Irk1, regulating their activity. Phosphorylation of Na-K-Cl cotransporter Ncc69 promotes its activation and ion influx. Involved in circadian rhythms in small ventral lateral (sLNv) pacemaker neurons: in the morning, Wnk activity is repressed by high levels of intracellular chloride; in contrast Wnk activation in the evening promotes the activation of the inwardly rectifying potassium channel Irk1 via Fray. Acts as a positive regulator of the canonical Wnt signaling pathway during wing disk development. The chain is Serine/threonine-protein kinase Wnk from Drosophila melanogaster (Fruit fly).